A 208-amino-acid polypeptide reads, in one-letter code: MAKNHYNITLALAGICQSGRLVQQLSHENQCDTDAVTTMVNSILNTNPASVLDVFGNHERNLKIGLNAMLGMFNSSNNGISADLTRYILSLIALERRLMKNQAASDALGNRISLLERQQAYFEPMSEGMFNALAGIYVDVISPLGPRIQVTGSPDILRNPLVQAKVRAILLAGVRCAVLWQQVGGGRLQLMFSRQRLIQQAKDILSHC.

Belongs to the HflD family.

The protein resides in the cytoplasm. It is found in the cell inner membrane. This chain is High frequency lysogenization protein HflD homolog, found in Photorhabdus laumondii subsp. laumondii (strain DSM 15139 / CIP 105565 / TT01) (Photorhabdus luminescens subsp. laumondii).